Consider the following 282-residue polypeptide: Undecaprenyl-diphosphatase (282 aa).

7 helical membrane passes run 45–65 (AFME…VVFI), 86–106 (WQLW…GIPL), 114–134 (FHNF…FILI), 151–171 (LPYK…FPGT), 196–216 (FFLG…KFIL), 224–244 (GQLT…MYVI), and 256–276 (FTVF…YWVF).

Belongs to the UppP family.

The protein resides in the cell membrane. The enzyme catalyses di-trans,octa-cis-undecaprenyl diphosphate + H2O = di-trans,octa-cis-undecaprenyl phosphate + phosphate + H(+). Functionally, catalyzes the dephosphorylation of undecaprenyl diphosphate (UPP). Confers resistance to bacitracin. The chain is Undecaprenyl-diphosphatase from Streptococcus gordonii (strain Challis / ATCC 35105 / BCRC 15272 / CH1 / DL1 / V288).